The primary structure comprises 548 residues: Palmitoyltransferase pfa3 (548 aa).

Residues 1–32 (MMATLATSPPTSPTWPKRRPRAWALRCERYCC) lie on the Cytoplasmic side of the membrane. A helical transmembrane segment spans residues 33–53 (AAATYFPLAFVYSLTTWAVYV). Over 54–70 (EASIGLKPSRSPWIGLP) the chain is Extracellular. The helical transmembrane segment at 71 to 91 (TSILGVLLYICLNASYTVAVF) threads the bilayer. The Cytoplasmic portion of the chain corresponds to 92-173 (TDPGSPLTTG…ATCVGLYNYK (82 aa)). A DHHC domain is found at 130–180 (RYCKKCQCPKPDRAHHCSTCKRCVLKMDHHCPWLATCVGLYNYKAFLLFLI). Residues 174-194 (AFLLFLIYTSLFCWVDFAVSA) traverse the membrane as a helical segment. Topologically, residues 195–215 (TWIWTEVFNDAPYLETMLPVN) are extracellular. The chain crosses the membrane as a helical span at residues 216 to 236 (VVLLAILGGIIGLVLTGFTAW). Over 237–548 (HISLAVRGMT…EDSSEWRDWD (312 aa)) the chain is Cytoplasmic. Disordered regions lie at residues 313 to 339 (RAEE…DQLT) and 463 to 548 (NPHQ…RDWD). The span at 508-535 (DPLNQQSVPANGAVNQLQKANEASSATT) shows a compositional bias: polar residues. Basic and acidic residues predominate over residues 536-548 (NRREDSSEWRDWD).

The protein belongs to the DHHC palmitoyltransferase family. PFA3 subfamily. Post-translationally, autopalmitoylated.

It is found in the vacuole membrane. It carries out the reaction L-cysteinyl-[protein] + hexadecanoyl-CoA = S-hexadecanoyl-L-cysteinyl-[protein] + CoA. Palmitoyltransferase specific for VAC8. Palmitoylates VAC8 at one or more of its N-terminal cysteine residues, which is required for its proper membrane localization. This Aspergillus fumigatus (strain ATCC MYA-4609 / CBS 101355 / FGSC A1100 / Af293) (Neosartorya fumigata) protein is Palmitoyltransferase pfa3 (pfa3).